Consider the following 156-residue polypeptide: Small ribosomal subunit protein uS7 (156 aa).

Belongs to the universal ribosomal protein uS7 family. As to quaternary structure, part of the 30S ribosomal subunit. Contacts proteins S9 and S11.

Functionally, one of the primary rRNA binding proteins, it binds directly to 16S rRNA where it nucleates assembly of the head domain of the 30S subunit. Is located at the subunit interface close to the decoding center, probably blocks exit of the E-site tRNA. This is Small ribosomal subunit protein uS7 from Streptococcus thermophilus (strain CNRZ 1066).